A 382-amino-acid polypeptide reads, in one-letter code: E3 ubiquitin-protein ligase RNF133 (382 aa).

Residues 65–167 (SSILKRVAGV…IKGMEILHLI (103 aa)) form the PA domain. The chain crosses the membrane as a helical span at residues 190–210 (YFVSFMIVTTATLAYFTFYHI). Residues 256 to 297 (CVICFEAYKPNEIVRILTCKHFFHKNCIDPWILAHGTCPMCK) form an RING-type; atypical zinc finger. Residues 328-382 (TLSPVEEETNYELPPARTSSKVTHVQEHPTSSANAGSQPPEAEETSHPSHGQQVL) form a disordered region. A compositionally biased stretch (polar residues) spans 344–364 (RTSSKVTHVQEHPTSSANAGS).

Interacts with E3 ligase UBE2J1. Post-translationally, auto-ubiquitinated. As to expression, expression is testis-specific.

The protein localises to the endoplasmic reticulum membrane. The enzyme catalyses S-ubiquitinyl-[E2 ubiquitin-conjugating enzyme]-L-cysteine + [acceptor protein]-L-lysine = [E2 ubiquitin-conjugating enzyme]-L-cysteine + N(6)-ubiquitinyl-[acceptor protein]-L-lysine.. It participates in protein modification; protein ubiquitination. Its function is as follows. Has E3 ubiquitin-protein ligase activity. Plays a role in male fecundity through the interaction with the E2 ubituitin-protein ligase UBE2J1. In Mus musculus (Mouse), this protein is E3 ubiquitin-protein ligase RNF133 (Rnf133).